Consider the following 649-residue polypeptide: Exoribonuclease 2 (649 aa).

The RNB domain maps to 190–517; the sequence is RKDLTDLDFI…NHRLLKSIIK (328 aa). An S1 motif domain is found at 562–644; sequence NQKFNAEITD…KTRSIIAKPV (83 aa).

This sequence belongs to the RNR ribonuclease family. RNase II subfamily.

It localises to the cytoplasm. It carries out the reaction Exonucleolytic cleavage in the 3'- to 5'-direction to yield nucleoside 5'-phosphates.. In terms of biological role, involved in mRNA degradation. Hydrolyzes single-stranded polyribonucleotides processively in the 3' to 5' direction. This Buchnera aphidicola subsp. Acyrthosiphon pisum (strain 5A) protein is Exoribonuclease 2.